Here is a 258-residue protein sequence, read N- to C-terminus: Imidazole glycerol phosphate synthase subunit HisF (258 aa).

Catalysis depends on residues Asp-11 and Asp-130.

This sequence belongs to the HisA/HisF family. As to quaternary structure, heterodimer of HisH and HisF.

The protein resides in the cytoplasm. The catalysed reaction is 5-[(5-phospho-1-deoxy-D-ribulos-1-ylimino)methylamino]-1-(5-phospho-beta-D-ribosyl)imidazole-4-carboxamide + L-glutamine = D-erythro-1-(imidazol-4-yl)glycerol 3-phosphate + 5-amino-1-(5-phospho-beta-D-ribosyl)imidazole-4-carboxamide + L-glutamate + H(+). Its pathway is amino-acid biosynthesis; L-histidine biosynthesis; L-histidine from 5-phospho-alpha-D-ribose 1-diphosphate: step 5/9. Its function is as follows. IGPS catalyzes the conversion of PRFAR and glutamine to IGP, AICAR and glutamate. The HisF subunit catalyzes the cyclization activity that produces IGP and AICAR from PRFAR using the ammonia provided by the HisH subunit. The protein is Imidazole glycerol phosphate synthase subunit HisF of Blochmanniella floridana.